A 179-amino-acid chain; its full sequence is Fimbrial subunit ElfA (179 aa).

The signal sequence occupies residues 1 to 21 (MKKSVLTAFITVVCATSSVMA).

This sequence belongs to the fimbrial protein family.

The protein localises to the fimbrium. Functionally, part of the elfADCG-ycbUVF fimbrial operon, which promotes adhesion of bacteria to different abiotic surfaces. ElfA is the major fimbrial subunit produced by this operon. This Escherichia coli (strain K12) protein is Fimbrial subunit ElfA (elfA).